The primary structure comprises 499 residues: uncharacterized protein (499 aa).

Residues 6–35 and 272–282 each bind FAD; these read EAVI…VIER and YRDGRIFLAGD.

Belongs to the PheA/TfdB FAD monooxygenase family. FAD serves as cofactor.

This is an uncharacterized protein from Bacillus subtilis (strain 168).